The primary structure comprises 466 residues: Asparagine--tRNA ligase (466 aa).

Belongs to the class-II aminoacyl-tRNA synthetase family. Homodimer.

It localises to the cytoplasm. The enzyme catalyses tRNA(Asn) + L-asparagine + ATP = L-asparaginyl-tRNA(Asn) + AMP + diphosphate + H(+). This is Asparagine--tRNA ligase from Syntrophobacter fumaroxidans (strain DSM 10017 / MPOB).